We begin with the raw amino-acid sequence, 143 residues long: Large ribosomal subunit protein uL15 (143 aa).

The disordered stretch occupies residues 20–52 (GRGIGSGKGKTAGRGHKGQHSRAGGYHKVGFEG). Positions 30–39 (TAGRGHKGQH) are enriched in basic residues.

The protein belongs to the universal ribosomal protein uL15 family. In terms of assembly, part of the 50S ribosomal subunit.

Functionally, binds to the 23S rRNA. This is Large ribosomal subunit protein uL15 from Coxiella burnetii (strain CbuK_Q154) (Coxiella burnetii (strain Q154)).